The sequence spans 190 residues: Ribosome hibernation promotion factor (190 aa).

This sequence belongs to the HPF/YfiA ribosome-associated protein family. Long HPF subfamily. Interacts with 100S ribosomes.

It localises to the cytoplasm. In terms of biological role, required for dimerization of active 70S ribosomes into 100S ribosomes in stationary phase; 100S ribosomes are translationally inactive and sometimes present during exponential growth. This chain is Ribosome hibernation promotion factor, found in Staphylococcus saprophyticus subsp. saprophyticus (strain ATCC 15305 / DSM 20229 / NCIMB 8711 / NCTC 7292 / S-41).